The following is an 86-amino-acid chain: Small ribosomal subunit protein uS15 (86 aa).

Belongs to the universal ribosomal protein uS15 family. Part of the 30S ribosomal subunit. Forms a bridge to the 50S subunit in the 70S ribosome, contacting the 23S rRNA.

In terms of biological role, one of the primary rRNA binding proteins, it binds directly to 16S rRNA where it helps nucleate assembly of the platform of the 30S subunit by binding and bridging several RNA helices of the 16S rRNA. Functionally, forms an intersubunit bridge (bridge B4) with the 23S rRNA of the 50S subunit in the ribosome. In Vesicomyosocius okutanii subsp. Calyptogena okutanii (strain HA), this protein is Small ribosomal subunit protein uS15.